Reading from the N-terminus, the 564-residue chain is O-fucosyltransferase 5 (564 aa).

Residues 1-28 are disordered; that stretch reads MVRNSSDEEEDHRNLIPQNDTRDNDLNL. Residues 70 to 90 traverse the membrane as a helical; Signal-anchor for type II membrane protein segment; sequence YVVAAVSLTLFVGLLFLFTDT. 3 N-linked (GlcNAc...) asparagine glycosylation sites follow: asparagine 129, asparagine 134, and asparagine 174. Substrate-binding positions include 413–415 and 529–530; these read HLR and TF.

The protein belongs to the glycosyltransferase GT106 family.

The protein resides in the membrane. The protein operates within glycan metabolism. The polypeptide is O-fucosyltransferase 5 (Arabidopsis thaliana (Mouse-ear cress)).